A 474-amino-acid chain; its full sequence is Putative response regulator NtrX-like (474 aa).

Positions 5–121 constitute a Response regulatory domain; it reads DVLIVDDEES…KLVILLTRAC (117 aa). The residue at position 54 (Asp54) is a 4-aspartylphosphate. The Sigma-54 factor interaction domain maps to 143–368; sequence LVGECSVTLK…LRNVVEWTLI (226 aa). ATP contacts are provided by residues 171-178 and 231-240; these read GKVGSGKE and ANNGTLYIDE.

Its function is as follows. Member of the two-component regulatory system RC0849/RC0948. This chain is Putative response regulator NtrX-like, found in Rickettsia conorii (strain ATCC VR-613 / Malish 7).